The following is a 220-amino-acid chain: MRNCCLRQLGRIDYASALEIQEQLAASRKQGTAADHLLLLEHPHVITLGRNGHLENLLAGDDILERAGIAFFPTNRGGDVTYHGPGQLVGYPILDLRDWKRDVGAYVRALEQAIIDTLGDYGIEAGRIPKLTGVWVGERKIAAIGVHLSRWVTSHGFALNVSTDLSYFQYIVPCGLTKPVTSMAALGVRASLDEVGERFTRHFARIFDFEMLPGASLAAA.

A BPL/LPL catalytic domain is found at 31–211 (GTAADHLLLL…HFARIFDFEM (181 aa)). Substrate contacts are provided by residues 76 to 83 (RGGDVTYH), 143 to 145 (AIG), and 156 to 158 (GFA). Residue cysteine 174 is the Acyl-thioester intermediate of the active site.

Belongs to the LipB family.

It is found in the cytoplasm. It carries out the reaction octanoyl-[ACP] + L-lysyl-[protein] = N(6)-octanoyl-L-lysyl-[protein] + holo-[ACP] + H(+). Its pathway is protein modification; protein lipoylation via endogenous pathway; protein N(6)-(lipoyl)lysine from octanoyl-[acyl-carrier-protein]: step 1/2. Catalyzes the transfer of endogenously produced octanoic acid from octanoyl-acyl-carrier-protein onto the lipoyl domains of lipoate-dependent enzymes. Lipoyl-ACP can also act as a substrate although octanoyl-ACP is likely to be the physiological substrate. In Solibacter usitatus (strain Ellin6076), this protein is Octanoyltransferase.